The primary structure comprises 722 residues: Probable acyl-activating enzyme 16, chloroplastic (722 aa).

The N-terminal 47 residues, 1 to 47 (MASTSLGASILVSHCSSAPEFQVSGMRLVFGYKAFGCRTSRRGFRVR), are a transit peptide targeting the chloroplast.

Belongs to the ATP-dependent AMP-binding enzyme family.

The protein resides in the plastid. It is found in the chloroplast. Functionally, may be involved in the activation of fatty acids to acyl-carrier-protein. The chain is Probable acyl-activating enzyme 16, chloroplastic (AAE16) from Arabidopsis thaliana (Mouse-ear cress).